A 105-amino-acid polypeptide reads, in one-letter code: Large ribosomal subunit protein uL24 (105 aa).

The protein belongs to the universal ribosomal protein uL24 family. As to quaternary structure, part of the 50S ribosomal subunit.

Functionally, one of two assembly initiator proteins, it binds directly to the 5'-end of the 23S rRNA, where it nucleates assembly of the 50S subunit. Its function is as follows. One of the proteins that surrounds the polypeptide exit tunnel on the outside of the subunit. This chain is Large ribosomal subunit protein uL24, found in Psychrobacter cryohalolentis (strain ATCC BAA-1226 / DSM 17306 / VKM B-2378 / K5).